Consider the following 243-residue polypeptide: Cell division protein ZipA (243 aa).

The Periplasmic segment spans residues 1 to 4 (MSDV). A helical transmembrane segment spans residues 5–25 (TLLRIGIAIVGILFVAAVFFF). Residues 26-243 (STPKTSAHRV…VPPLIKNSRW (218 aa)) are Cytoplasmic-facing. A disordered region spans residues 32–89 (AHRVRTKKEEPPRERREPMLSTEADNSPPQGVDEVPASVSQQQVNPEANKPGEVQLGK). The segment covering 38–49 (KKEEPPRERREP) has biased composition (basic and acidic residues).

This sequence belongs to the ZipA family. As to quaternary structure, interacts with FtsZ via their C-terminal domains.

The protein resides in the cell inner membrane. Functionally, essential cell division protein that stabilizes the FtsZ protofilaments by cross-linking them and that serves as a cytoplasmic membrane anchor for the Z ring. Also required for the recruitment to the septal ring of downstream cell division proteins. The protein is Cell division protein ZipA of Xylella fastidiosa (strain 9a5c).